A 618-amino-acid polypeptide reads, in one-letter code: 1-deoxy-D-xylulose-5-phosphate synthase (618 aa).

Residues H72 and 113–115 (GHA) each bind thiamine diphosphate. D144 serves as a coordination point for Mg(2+). Thiamine diphosphate is bound by residues 145 to 146 (GA), N173, H284, and E359. Mg(2+) is bound at residue N173.

The protein belongs to the transketolase family. DXPS subfamily. As to quaternary structure, homodimer. It depends on Mg(2+) as a cofactor. Thiamine diphosphate serves as cofactor.

It carries out the reaction D-glyceraldehyde 3-phosphate + pyruvate + H(+) = 1-deoxy-D-xylulose 5-phosphate + CO2. Its pathway is metabolic intermediate biosynthesis; 1-deoxy-D-xylulose 5-phosphate biosynthesis; 1-deoxy-D-xylulose 5-phosphate from D-glyceraldehyde 3-phosphate and pyruvate: step 1/1. In terms of biological role, catalyzes the acyloin condensation reaction between C atoms 2 and 3 of pyruvate and glyceraldehyde 3-phosphate to yield 1-deoxy-D-xylulose-5-phosphate (DXP). This chain is 1-deoxy-D-xylulose-5-phosphate synthase, found in Dictyoglomus turgidum (strain DSM 6724 / Z-1310).